The sequence spans 238 residues: Purine nucleoside phosphorylase DeoD-type (238 aa).

His-5 is an a purine D-ribonucleoside binding site. Phosphate contacts are provided by residues Gly-21, Arg-25, Arg-44, and 88–91 (RVGS). A purine D-ribonucleoside contacts are provided by residues 180–182 (EME) and 204–205 (SD). Asp-205 functions as the Proton donor in the catalytic mechanism.

Belongs to the PNP/UDP phosphorylase family. As to quaternary structure, homohexamer; trimer of homodimers.

It catalyses the reaction a purine D-ribonucleoside + phosphate = a purine nucleobase + alpha-D-ribose 1-phosphate. The enzyme catalyses a purine 2'-deoxy-D-ribonucleoside + phosphate = a purine nucleobase + 2-deoxy-alpha-D-ribose 1-phosphate. Catalyzes the reversible phosphorolytic breakdown of the N-glycosidic bond in the beta-(deoxy)ribonucleoside molecules, with the formation of the corresponding free purine bases and pentose-1-phosphate. The sequence is that of Purine nucleoside phosphorylase DeoD-type from Photorhabdus laumondii subsp. laumondii (strain DSM 15139 / CIP 105565 / TT01) (Photorhabdus luminescens subsp. laumondii).